A 235-amino-acid chain; its full sequence is Ribonuclease 3 (235 aa).

The 130-residue stretch at 8–137 (PAELARRIGI…VIGAIFLSGG (130 aa)) folds into the RNase III domain. Glutamate 50 is a binding site for Mg(2+). Aspartate 54 is an active-site residue. Aspartate 123 and glutamate 126 together coordinate Mg(2+). Residue glutamate 126 is part of the active site. In terms of domain architecture, DRBM spans 163–232 (DNKTAFQEWV…AGRAMREWAG (70 aa)). Residues 211–235 (QGRTKKEAEQQAAGRAMREWAGRKG) are disordered. A compositionally biased stretch (basic and acidic residues) spans 226-235 (AMREWAGRKG).

This sequence belongs to the ribonuclease III family. In terms of assembly, homodimer. Requires Mg(2+) as cofactor.

Its subcellular location is the cytoplasm. The catalysed reaction is Endonucleolytic cleavage to 5'-phosphomonoester.. In terms of biological role, digests double-stranded RNA. Involved in the processing of primary rRNA transcript to yield the immediate precursors to the large and small rRNAs (23S and 16S). Processes some mRNAs, and tRNAs when they are encoded in the rRNA operon. Processes pre-crRNA and tracrRNA of type II CRISPR loci if present in the organism. In Heliobacterium modesticaldum (strain ATCC 51547 / Ice1), this protein is Ribonuclease 3.